The primary structure comprises 219 residues: Probable transcription factor At1g55950 (219 aa).

Residues 9–77 (ASHSLKSLMA…DEKMETEEEG (69 aa)) form a disordered region. A compositionally biased stretch (basic residues) spans 17-30 (MAKKNKRSQQKNKC). A compositionally biased stretch (basic and acidic residues) spans 31 to 48 (LKPEKDPSTVKRLLEDPP). Positions 65-77 (YGDDEKMETEEEG) are enriched in acidic residues.

This sequence belongs to the GeBP family.

This is Probable transcription factor At1g55950 from Arabidopsis thaliana (Mouse-ear cress).